Consider the following 1679-residue polypeptide: [F-actin]-monooxygenase mical2b (1679 aa).

The monooxygenase domain stretch occupies residues 2-494 (GETEEERTSQ…RHLFISGEQD (493 aa)). FAD contacts are provided by residues Cys-97, 97–125 (CGFR…SRNN), Glu-116, Arg-118, Arg-123, Asn-125, and Asp-398. One can recognise a Calponin-homology (CH) domain in the interval 516-619 (EVRPGRLLLW…MVLYLSKFYE (104 aa)). A Nuclear localization signal motif is present at residues 658 to 679 (RKRIPKLDKKLEESDVNRKRKK). Disordered stretches follow at residues 661–772 (IPKL…KAKW), 818–838 (SAYK…TPTL), 874–907 (SSLF…ESST), 1073–1163 (STRH…RSTA), 1194–1247 (KPED…DEIP), 1259–1283 (EYPK…ISFS), 1302–1342 (DLTN…PAPP), and 1473–1509 (RNKA…KKKE). Composition is skewed to basic and acidic residues over residues 662–674 (PKLD…SDVN) and 697–707 (GEREEQKENKV). A compositionally biased stretch (polar residues) spans 874-888 (SSLFTGNPAQPQTDE). One can recognise an LIM zinc-binding domain in the interval 1011 to 1073 (DTCVFCQKRV…KMHFSQRKTS (63 aa)). Over residues 1086 to 1099 (IRSSSITISNHTST) the composition is skewed to low complexity. Positions 1112–1123 (DSSTQQDLQTLP) are enriched in polar residues. Residues 1133 to 1143 (EVKDSSKKADP) are compositionally biased toward basic and acidic residues. Over residues 1144 to 1154 (ADSAPACPDSP) the composition is skewed to low complexity. Residues 1202–1211 (LAEEDGNSDF) are compositionally biased toward acidic residues. Positions 1220 to 1242 (SKKPSNPSTDSNCLPTKDNSSTP) are enriched in polar residues. The span at 1259 to 1270 (EYPKPSSSSPEP) shows a compositional bias: low complexity. A compositionally biased stretch (polar residues) spans 1302–1325 (DLTNPGKSGAEEQQQQHVKPSISL). Over residues 1333 to 1342 (THPQPEPAPP) the composition is skewed to pro residues. Residues 1475–1489 (KASAQQQQQQKSNSS) show a composition bias toward low complexity. Residues 1517 to 1667 (KSDELKRLHR…EKAEDRDLES (151 aa)) form the bMERB domain.

This sequence belongs to the Mical family. It depends on FAD as a cofactor.

It is found in the nucleus. Its subcellular location is the cytoplasm. The enzyme catalyses L-methionyl-[F-actin] + NADPH + O2 + H(+) = L-methionyl-(R)-S-oxide-[F-actin] + NADP(+) + H2O. Its function is as follows. Nuclear monooxygenase that promotes depolymerization of F-actin by mediating oxidation of specific methionine residues on actin and regulates the srf signaling. Acts by modifying nuclear actin subunits through the addition of oxygen to form methionine-sulfoxide, leading to promote actin filament severing and prevent repolymerization. Acts as a key regulator of the srf signaling pathway elicited by nerve growth factor and serum: mediates oxidation and subsequent depolymerization of nuclear actin, leading to increase mkl1/mrtf-a presence in the nucleus and promote srf:mkl1/mrtf-a-dependent gene transcription. The chain is [F-actin]-monooxygenase mical2b from Danio rerio (Zebrafish).